Consider the following 298-residue polypeptide: Porphobilinogen deaminase (298 aa).

Cysteine 239 carries the post-translational modification S-(dipyrrolylmethanemethyl)cysteine.

It belongs to the HMBS family. In terms of assembly, monomer. The cofactor is dipyrromethane.

The catalysed reaction is 4 porphobilinogen + H2O = hydroxymethylbilane + 4 NH4(+). The protein operates within porphyrin-containing compound metabolism; protoporphyrin-IX biosynthesis; coproporphyrinogen-III from 5-aminolevulinate: step 2/4. In terms of biological role, tetrapolymerization of the monopyrrole PBG into the hydroxymethylbilane pre-uroporphyrinogen in several discrete steps. This Ehrlichia canis (strain Jake) protein is Porphobilinogen deaminase.